A 288-amino-acid chain; its full sequence is 4-hydroxybenzoate octaprenyltransferase (288 aa).

The next 8 helical transmembrane spans lie at 23–43 (IGSL…GRGI), 46–66 (AKIL…GCVV), 98–118 (ILFV…NSMT), 141–161 (LPQV…FAAV), 163–183 (ESLP…TVAY), 213–233 (LIIG…GWLM), 234–254 (NLGG…THQQ), and 268–288 (AFLN…ISYW).

This sequence belongs to the UbiA prenyltransferase family. Requires Mg(2+) as cofactor.

It is found in the cell inner membrane. The enzyme catalyses all-trans-octaprenyl diphosphate + 4-hydroxybenzoate = 4-hydroxy-3-(all-trans-octaprenyl)benzoate + diphosphate. Its pathway is cofactor biosynthesis; ubiquinone biosynthesis. Its function is as follows. Catalyzes the prenylation of para-hydroxybenzoate (PHB) with an all-trans polyprenyl group. Mediates the second step in the final reaction sequence of ubiquinone-8 (UQ-8) biosynthesis, which is the condensation of the polyisoprenoid side chain with PHB, generating the first membrane-bound Q intermediate 3-octaprenyl-4-hydroxybenzoate. The polypeptide is 4-hydroxybenzoate octaprenyltransferase (Yersinia pseudotuberculosis serotype IB (strain PB1/+)).